A 210-amino-acid polypeptide reads, in one-letter code: Eukaryotic translation initiation factor 2 subunit gamma (210 aa).

Positions 1-196 (IGHVAHGKST…HLVETITPPR (196 aa)) constitute a tr-type G domain. Positions 2–9 (GHVAHGKS) are G1. 5 to 10 (AHGKST) contacts GTP. The segment at 30 to 34 (NITIK) is G2. The segment at 85–88 (DCPG) is G3. GTP contacts are provided by residues 141 to 144 (NKID) and 174 to 176 (SAI). The G4 stretch occupies residues 141–144 (NKID). Positions 174–176 (SAI) are G5.

It belongs to the TRAFAC class translation factor GTPase superfamily. Classic translation factor GTPase family. EIF2G subfamily. In terms of assembly, eukaryotic translation initiation factor 2 eIF2 is a heterotrimeric complex composed of an alpha, a beta and a gamma subunit. The factors eIF-1, eIF-2, eIF-3, TIF5/eIF-5 and methionyl-tRNAi form a multifactor complex (MFC) that may bind to the 40S ribosome.

The protein localises to the cytoplasm. The protein resides in the cytosol. The enzyme catalyses GTP + H2O = GDP + phosphate + H(+). As a subunit of eukaryotic initiation factor 2 eIF2, involved in the early steps of protein synthesis. In the presence of GTP, eIF-2 forms a ternary complex with initiator tRNA Met-tRNAi and then recruits the 40S ribosomal complex and initiation factors eIF-1, eIF-1A and eIF-3 to form the 43S pre-initiation complex (43S PIC), a step that determines the rate of protein translation. The 43S PIC binds to mRNA and scans downstream to the initiation codon, where it forms a 48S initiation complex by codon-anticodon base pairing. This leads to the displacement of eIF-1 to allow GTPase-activating protein (GAP) eIF-5-mediated hydrolysis of eIF2-bound GTP. Hydrolysis of GTP and release of Pi, which makes GTP hydrolysis irreversible, causes the release of the eIF-2-GDP binary complex from the 40S subunit, an event that is essential for the subsequent joining of the 60S ribosomal subunit to form an elongation-competent 80S ribosome. In order for eIF-2 to recycle and catalyze another round of initiation, the GDP bound to eIF-2 must be exchanged with GTP by way of a reaction catalyzed by GDP-GTP exchange factor (GEF) eIF-2B. The polypeptide is Eukaryotic translation initiation factor 2 subunit gamma (Spironucleus vortens).